A 1137-amino-acid polypeptide reads, in one-letter code: UDP-N-acetylglucosamine transferase subunit ALG13 (1137 aa).

Positions 1–125 (MKCVFVTVGT…LHKEGHLFYC (125 aa)) are glycosyltransferase activity. Positions 126–400 (TCRVLTCPGQ…GSKKNRNNAV (275 aa)) are deubiquitinase activity. An OTU domain is found at 231 to 352 (LFRKLTAKDA…SGHYDSVYSK (122 aa)). The active-site For deubiquitinase activity is the Asp-239. Cys-242 (nucleophile; for deubiquitinase activity) is an active-site residue. The For deubiquitinase activity role is filled by His-345. The region spanning 492-552 (QYYLGDKCQV…KPVTQVMSVP (61 aa)) is the Tudor domain. 2 disordered regions span residues 641–660 (HFHP…MPRN) and 911–974 (IPHA…SGSD). 2 stretches are compositionally biased toward pro residues: residues 918-946 (LPPP…PPPA) and 956-967 (QPPPPLPPPPYS).

Belongs to the glycosyltransferase 28 family. In terms of assembly, forms with ALG14 the active heterodimeric UDP-N-acetylglucosamine transferase complex. As to quaternary structure, not able to interact with ALG14 to form an active UDP-N-acetylglucosamine transferase complex.

It localises to the endoplasmic reticulum membrane. It carries out the reaction an N-acetyl-alpha-D-glucosaminyl-diphospho-di-trans,poly-cis-dolichol + UDP-N-acetyl-alpha-D-glucosamine = an N,N'-diacetylchitobiosyl-diphospho-di-trans,poly-cis-dolichol + UDP + H(+). The protein operates within protein modification; protein glycosylation. Its function is as follows. Catalytic subunit of the UDP-N-acetylglucosamine transferase complex that operates in the biosynthetic pathway of dolichol-linked oligosaccharides, the glycan precursors employed in protein asparagine (N)-glycosylation. The assembly of dolichol-linked oligosaccharides begins on the cytosolic side of the endoplasmic reticulum membrane and finishes in its lumen. The sequential addition of sugars to dolichol pyrophosphate produces dolichol-linked oligosaccharides containing fourteen sugars, including two GlcNAcs, nine mannoses and three glucoses. Once assembled, the oligosaccharide is transferred from the lipid to nascent proteins by oligosaccharyltransferases. On the cytoplasmic face of the endoplasmic reticulum, the dimeric ALG13/ALG14 complex catalyzes the second step of dolichol pyrophosphate biosynthesis, transferring a beta1,4-linked N-acetylglucosamine (GlcNAc) from UDP-GlcNAc to GlcNAc-pyrophosphatedolichol (Gn-PDol) to produce N,N'-diacetylchitobiosyl diphosphodolichol. N,N'-diacetylchitobiosyl diphosphodolichol is a substrate for ALG1, the following enzyme in the biosynthetic pathway. No glycosyltransferase or deubiquitinase activity is detected for this potential multifunctional enzyme. The protein is UDP-N-acetylglucosamine transferase subunit ALG13 of Homo sapiens (Human).